The chain runs to 272 residues: Sulfur carrier protein FdhD (272 aa).

The Cysteine persulfide intermediate role is filled by Cys-114.

Belongs to the FdhD family.

It is found in the cytoplasm. Its function is as follows. Required for formate dehydrogenase (FDH) activity. Acts as a sulfur carrier protein that transfers sulfur from IscS to the molybdenum cofactor prior to its insertion into FDH. This Mycolicibacterium paratuberculosis (strain ATCC BAA-968 / K-10) (Mycobacterium paratuberculosis) protein is Sulfur carrier protein FdhD.